The chain runs to 491 residues: Monocarboxylate transport permease protein (491 aa).

A run of 13 helical transmembrane segments spans residues 7 to 27 (GTAL…GFVA), 55 to 75 (WFLV…PALV), 83 to 103 (FFAL…MPVL), 130 to 150 (LAVA…QLVG), 157 to 177 (ALGL…ALYT), 187 to 207 (LIAF…VALI), 246 to 266 (LALG…GIFA), 277 to 297 (AIML…GYMG), 322 to 342 (WFSG…AAVM), 374 to 396 (ITSL…QFAL), 400 to 422 (LLGG…TNWF), 427 to 447 (LLAG…DAGW), and 465 to 485 (GLLA…LLPA).

Belongs to the sodium:solute symporter (SSF) (TC 2.A.21) family.

The protein localises to the cell membrane. Inhibited by CCCP, but is apparently not affected by the concentration of sodium. Low-affinity transporter of alanine and high-affinity transporter of lactate and pyruvate. Can also transport other monocarboxylates such as propionate, butyrate, alpha-hydroxybutyrate or acetate. May be proton coupled. Required for optimal growth on alanine or pyruvate and ammonia. The chain is Monocarboxylate transport permease protein from Rhizobium johnstonii (strain DSM 114642 / LMG 32736 / 3841) (Rhizobium leguminosarum bv. viciae).